A 465-amino-acid chain; its full sequence is uncharacterized protein (465 aa).

Disordered stretches follow at residues 95–173 (STST…RKDP), 407–426 (QEME…KSDK), and 443–465 (ANPI…SSKK). Residues 118-137 (KTGSKKVTRSKKSKKTKRRS) are compositionally biased toward basic residues. Over residues 138–150 (STTVTTTTISNSK) the composition is skewed to low complexity. Residues 153–173 (TPDKDKDSKDQRKQRTKRKDP) are compositionally biased toward basic and acidic residues. The span at 451–465 (MARRNRRSKGSSSKK) shows a compositional bias: basic residues.

This is an uncharacterized protein from Caenorhabditis elegans.